A 97-amino-acid chain; its full sequence is Nucleoid-associated protein HP_0035 (97 aa).

This sequence belongs to the YbaB/EbfC family. Homodimer.

It is found in the cytoplasm. Its subcellular location is the nucleoid. In terms of biological role, binds to DNA and alters its conformation. May be involved in regulation of gene expression, nucleoid organization and DNA protection. In Helicobacter pylori (strain ATCC 700392 / 26695) (Campylobacter pylori), this protein is Nucleoid-associated protein HP_0035.